The primary structure comprises 296 residues: Transmembrane O-methyltransferase (296 aa).

A helical transmembrane segment spans residues 36-56 (VGTMSPAIALAFLPLVVTLLV). S-adenosyl-L-methionine contacts are provided by residues E142, 144 to 145 (GT), S150, E168, and S198.

The protein belongs to the class I-like SAM-binding methyltransferase superfamily. Cation-dependent O-methyltransferase family. Interacts with LHFPL5, PCDH15, TMC1, TMC2 and TMIE. Interacts directly with TMC1. The interaction of TOMT with TMC1 and TMC2 is required for the transportation of TMC1/2 into the stereocilia of hair cells.

Its subcellular location is the membrane. It localises to the cytoplasm. The protein localises to the endoplasmic reticulum. It carries out the reaction a catechol + S-adenosyl-L-methionine = a guaiacol + S-adenosyl-L-homocysteine + H(+). In terms of biological role, catalyzes the O-methylation, and thereby the inactivation, of catecholamine neurotransmitters and catechol hormones. Required for auditory function. Component of the cochlear hair cell's mechanotransduction (MET) machinery. Involved in the assembly of the asymmetric tip-link MET complex. Required for transportation of TMC1 and TMC2 proteins into the mechanically sensitive stereocilia of the hair cells. The function in MET is independent of the enzymatic activity. The sequence is that of Transmembrane O-methyltransferase from Macaca mulatta (Rhesus macaque).